We begin with the raw amino-acid sequence, 377 residues long: Presenilin-associated rhomboid-like protein, mitochondrial (377 aa).

The N-terminal 50 residues, 1-50 (MALQGWVQRGWRCGPAWAPPLGGGYRELSATQAPRLLGRRFNLFVQQKCG), are a transit peptide targeting the mitochondrion. The Mitochondrial matrix segment spans residues 51 to 99 (FRKAPRKVEPRRSDTGSSGEAYKRSALIPPLEETVFYPSPYPIRTLVKP). Residues S63 and S68 each carry the phosphoserine modification. Residues 100–119 (FFFTIGFTGCAFGSAAIWQY) form a helical membrane-spanning segment. Over 120 to 165 (ESLKSRVQSYFDGIKADWLDSIRPQKEGNLRKEINKWWNSLSDGQR) the chain is Mitochondrial intermembrane. Residues 166-185 (TVTGIIAANALVFCLWRVPS) traverse the membrane as a helical segment. At 186-205 (LQRTMIRYFTSNPASKVLCS) the chain is on the mitochondrial matrix side. The helical transmembrane segment at 206 to 228 (PMLLSTFSHFSLFHMAANMYVLW) threads the bilayer. The Mitochondrial intermembrane portion of the chain corresponds to 229 to 242 (SFSSSIVNILGQEQ). Residues 243-260 (FVAVYLSAGVISNFVSYV) form a helical membrane-spanning segment. At 261–270 (CKVATGRYGP) the chain is on the mitochondrial matrix side. Residues 271-287 (SLGASGAIMTVLAAVCT) form a helical membrane-spanning segment. Residue S275 is the Nucleophile of the active site. Residues 288–293 (KIPEGR) are Mitochondrial intermembrane-facing. The chain crosses the membrane as a helical span at residues 294–316 (LAIIFLPVFTFTAGNALKAIIAM). At 317–330 (DTAGMILGWKFFDH) the chain is on the mitochondrial matrix side. The chain crosses the membrane as a helical span at residues 331-352 (AAHLGGALFGIWYITYGHELIW). Residue H333 is part of the active site. The Mitochondrial intermembrane portion of the chain corresponds to 353 to 377 (KNREPLVKIWHEIRTNGPKKGGGSK).

The protein belongs to the peptidase S54 family. Interacts with PSEN1 and PSEN2. Binds OPA1. In terms of processing, P-beta is proteolytically processed (beta-cleavage) in a PARL-dependent manner.

It localises to the mitochondrion inner membrane. The protein localises to the nucleus. The enzyme catalyses Cleaves type-1 transmembrane domains using a catalytic dyad composed of serine and histidine that are contributed by different transmembrane domains.. Its function is as follows. Required for the control of apoptosis during postnatal growth. Essential for proteolytic processing of an antiapoptotic form of OPA1 which prevents the release of mitochondrial cytochrome c in response to intrinsic apoptotic signals. Required for the maturation of PINK1 into its 52kDa mature form after its cleavage by mitochondrial-processing peptidase (MPP). Promotes cleavage of serine/threonine-protein phosphatase PGAM5 in damaged mitochondria in response to loss of mitochondrial membrane potential. Mediates differential cleavage of PINK1 and PGAM5 depending on the health status of mitochondria, disassociating from PINK1 and associating with PGAM5 in response to mitochondrial membrane potential loss. Required for processing of CLPB into a form with higher protein disaggregase activity by removing an autoinhibitory N-terminal peptide. Promotes processing of DIABLO/SMAC in the mitochondrion which is required for DIABLO apoptotic activity. Also required for cleavage of STARD7 and TTC19. Promotes changes in mitochondria morphology regulated by phosphorylation of P-beta domain. This chain is Presenilin-associated rhomboid-like protein, mitochondrial (Parl), found in Mus musculus (Mouse).